The chain runs to 226 residues: 7-cyano-7-deazaguanine synthase (226 aa).

10 to 20 contributes to the ATP binding site; that stretch reads LSGGLDSATAA. The Zn(2+) site is built by Cys-191, Cys-199, Cys-202, and Cys-205.

This sequence belongs to the QueC family. The cofactor is Zn(2+).

It carries out the reaction 7-carboxy-7-deazaguanine + NH4(+) + ATP = 7-cyano-7-deazaguanine + ADP + phosphate + H2O + H(+). Its pathway is purine metabolism; 7-cyano-7-deazaguanine biosynthesis. Catalyzes the ATP-dependent conversion of 7-carboxy-7-deazaguanine (CDG) to 7-cyano-7-deazaguanine (preQ(0)). This Synechococcus sp. (strain CC9605) protein is 7-cyano-7-deazaguanine synthase.